The chain runs to 386 residues: Succinyl-diaminopimelate desuccinylase (386 aa).

Position 76 (His-76) interacts with Zn(2+). Residue Asp-78 is part of the active site. Asp-110 lines the Zn(2+) pocket. Glu-144 functions as the Proton acceptor in the catalytic mechanism. The Zn(2+) site is built by Glu-145, Glu-173, and His-359.

The protein belongs to the peptidase M20A family. DapE subfamily. Homodimer. Zn(2+) is required as a cofactor. Co(2+) serves as cofactor.

It catalyses the reaction N-succinyl-(2S,6S)-2,6-diaminopimelate + H2O = (2S,6S)-2,6-diaminopimelate + succinate. It functions in the pathway amino-acid biosynthesis; L-lysine biosynthesis via DAP pathway; LL-2,6-diaminopimelate from (S)-tetrahydrodipicolinate (succinylase route): step 3/3. Functionally, catalyzes the hydrolysis of N-succinyl-L,L-diaminopimelic acid (SDAP), forming succinate and LL-2,6-diaminopimelate (DAP), an intermediate involved in the bacterial biosynthesis of lysine and meso-diaminopimelic acid, an essential component of bacterial cell walls. The sequence is that of Succinyl-diaminopimelate desuccinylase from Chromohalobacter salexigens (strain ATCC BAA-138 / DSM 3043 / CIP 106854 / NCIMB 13768 / 1H11).